A 159-amino-acid chain; its full sequence is NADH-quinone oxidoreductase subunit B (159 aa).

Residues Cys37, Cys38, Cys102, and Cys132 each contribute to the [4Fe-4S] cluster site.

It belongs to the complex I 20 kDa subunit family. NDH-1 is composed of 14 different subunits. Subunits NuoB, C, D, E, F, and G constitute the peripheral sector of the complex. [4Fe-4S] cluster is required as a cofactor.

It is found in the cell inner membrane. The catalysed reaction is a quinone + NADH + 5 H(+)(in) = a quinol + NAD(+) + 4 H(+)(out). NDH-1 shuttles electrons from NADH, via FMN and iron-sulfur (Fe-S) centers, to quinones in the respiratory chain. Couples the redox reaction to proton translocation (for every two electrons transferred, four hydrogen ions are translocated across the cytoplasmic membrane), and thus conserves the redox energy in a proton gradient. The polypeptide is NADH-quinone oxidoreductase subunit B (Polaromonas naphthalenivorans (strain CJ2)).